Here is a 473-residue protein sequence, read N- to C-terminus: Bifunctional protein HldE (473 aa).

A ribokinase region spans residues 1–318; sequence MKLSMPRFDQ…RAIQREEGSE (318 aa). 194–197 contributes to the ATP binding site; that stretch reads NLSE. Residue aspartate 263 is part of the active site. The interval 343–473 is cytidylyltransferase; that stretch reads FTNGCFDILH…TAIVEKIRKN (131 aa).

This sequence in the N-terminal section; belongs to the carbohydrate kinase PfkB family. It in the C-terminal section; belongs to the cytidylyltransferase family. Homodimer.

It carries out the reaction D-glycero-beta-D-manno-heptose 7-phosphate + ATP = D-glycero-beta-D-manno-heptose 1,7-bisphosphate + ADP + H(+). The enzyme catalyses D-glycero-beta-D-manno-heptose 1-phosphate + ATP + H(+) = ADP-D-glycero-beta-D-manno-heptose + diphosphate. The protein operates within nucleotide-sugar biosynthesis; ADP-L-glycero-beta-D-manno-heptose biosynthesis; ADP-L-glycero-beta-D-manno-heptose from D-glycero-beta-D-manno-heptose 7-phosphate: step 1/4. Its pathway is nucleotide-sugar biosynthesis; ADP-L-glycero-beta-D-manno-heptose biosynthesis; ADP-L-glycero-beta-D-manno-heptose from D-glycero-beta-D-manno-heptose 7-phosphate: step 3/4. In terms of biological role, catalyzes the phosphorylation of D-glycero-D-manno-heptose 7-phosphate at the C-1 position to selectively form D-glycero-beta-D-manno-heptose-1,7-bisphosphate. Functionally, catalyzes the ADP transfer from ATP to D-glycero-beta-D-manno-heptose 1-phosphate, yielding ADP-D-glycero-beta-D-manno-heptose. The polypeptide is Bifunctional protein HldE (Pseudomonas putida (strain ATCC 47054 / DSM 6125 / CFBP 8728 / NCIMB 11950 / KT2440)).